A 156-amino-acid chain; its full sequence is Small ribosomal subunit protein uS7 (156 aa).

This sequence belongs to the universal ribosomal protein uS7 family. Part of the 30S ribosomal subunit. Contacts proteins S9 and S11.

One of the primary rRNA binding proteins, it binds directly to 16S rRNA where it nucleates assembly of the head domain of the 30S subunit. Is located at the subunit interface close to the decoding center, probably blocks exit of the E-site tRNA. This is Small ribosomal subunit protein uS7 from Photobacterium profundum (strain SS9).